We begin with the raw amino-acid sequence, 118 residues long: Small ribosomal subunit protein uS13 (118 aa).

Positions 91–118 (HRRSLPVRGQRTKTNARTRKGPRKPIKA) are disordered.

Belongs to the universal ribosomal protein uS13 family. As to quaternary structure, part of the 30S ribosomal subunit. Forms a loose heterodimer with protein S19. Forms two bridges to the 50S subunit in the 70S ribosome.

In terms of biological role, located at the top of the head of the 30S subunit, it contacts several helices of the 16S rRNA. In the 70S ribosome it contacts the 23S rRNA (bridge B1a) and protein L5 of the 50S subunit (bridge B1b), connecting the 2 subunits; these bridges are implicated in subunit movement. Contacts the tRNAs in the A and P-sites. The sequence is that of Small ribosomal subunit protein uS13 from Francisella tularensis subsp. tularensis (strain FSC 198).